A 442-amino-acid chain; its full sequence is Transcriptional coactivator YAP1 (442 aa).

Phosphoserine; by LATS1 and LATS2 occurs at positions 21, 69, and 87. Disordered stretches follow at residues 51–89 and 97–116; these read LPDS…HSSP and VSPG…QHLR. Ser-119 is subject to Phosphoserine; by LATS1 and LATS2. WW domains are found at residues 126–159 and 186–219; these read MPLP…DPRK and GPLP…DPRL. The interval 230-254 is disordered; that stretch reads ISQSAPVKQGSQLPSSPQSGVMSGN. Positions 238–249 are enriched in low complexity; the sequence is QGSQLPSSPQSG. The interval 247-442 is transactivation domain; it reads QSGVMSGNNP…IDKENFLTWL (196 aa). The stretch at 258–279 forms a coiled coil; that stretch reads RLQQIHIEKERLRIKQELLRQR. The tract at residues 286–374 is disordered; it reads RNQLPTSMEQ…DTLGPGSMAT (89 aa). Polar residues-rich tracts occupy residues 288–304, 313–329, and 337–347; these read QLPT…NPVS, RNMT…SGTY, and DSGLSMSSYSV.

The protein belongs to the YAP1 family. In terms of processing, phosphorylated by lats1 and lats2; leading to cytoplasmic translocation and inactivation. As to expression, expressed in the notochord, brain, eyes, branchial arches and pectoral fins.

It localises to the cytoplasm. It is found in the nucleus. Its subcellular location is the cell junction. The protein localises to the tight junction. The protein resides in the cell membrane. Transcriptional regulator which can act both as a coactivator and a corepressor and is the critical downstream regulatory target in the Hippo signaling pathway that plays a pivotal role in organ size control and tumor suppression by restricting proliferation and promoting apoptosis. Required for expansion of the neural plate and neural plate border zone progenitor pools. Acts as a direct regulator of pax3 expression via interaction with tead1. Plays a key role in tissue tension and 3D tissue shape by regulating cortical actomyosin network formation. This Danio rerio (Zebrafish) protein is Transcriptional coactivator YAP1 (yap1).